A 936-amino-acid polypeptide reads, in one-letter code: Protein NNF2 (936 aa).

At 1–41 (MEEQFTNQKKVSHLQSLMNTKRSEQPTEFAKKHRFKDTLAL) the chain is on the lumenal side. Residue lysine 10 forms a Glycyl lysine isopeptide (Lys-Gly) (interchain with G-Cter in ubiquitin) linkage. A helical transmembrane segment spans residues 42-62 (FLVFLSFNHFTSLCLLVSFIV). Residues 63-120 (ATKCKDFLANCFIILFLSKKPSRHIGEVAHIDISTSKVTNGSSNRKSNSRFFGNSKNS) lie on the Cytoplasmic side of the membrane. Residues 121 to 141 (FVIPIPVLICEILFAMLLKIY) traverse the membrane as a helical segment. Topologically, residues 142–245 (GGDYFVKPIK…FKMLGKHSDS (104 aa)) are lumenal. A helical transmembrane segment spans residues 246–266 (MIYYLSFHILFFSFASSLLHP). Residues 267 to 936 (HRQTAENKPL…NIHSLIGNSY (670 aa)) lie on the Cytoplasmic side of the membrane. Disordered regions lie at residues 297–351 (RISS…SNIL), 387–437 (GSNS…DFFS), and 512–533 (TSENSLTPTNSNTSYVSNQEKH). Low complexity predominate over residues 299–308 (SSSSSVSADS). Residues 325–351 (LSSSNQTIHPSQQNNSPVPLSSHSNIL) show a composition bias toward polar residues. Low complexity-rich tracts occupy residues 394-405 (TTTTSTTTSPTT) and 414-428 (SLSNEISLSDSSNGN). Positions 512 to 529 (TSENSLTPTNSNTSYVSN) are enriched in polar residues.

The protein resides in the endoplasmic reticulum membrane. The sequence is that of Protein NNF2 (NNF2) from Saccharomyces cerevisiae (strain ATCC 204508 / S288c) (Baker's yeast).